We begin with the raw amino-acid sequence, 141 residues long: Hemoglobin subunit alpha-A (141 aa).

Residues 1–141 enclose the Globin domain; that stretch reads VLSPADKSNV…VGTVLTAKYR (141 aa). O2 is bound at residue His58. Residue His87 coordinates heme b.

It belongs to the globin family. In terms of assembly, heterotetramer of two alpha chains and two beta chains. As to expression, red blood cells.

In terms of biological role, involved in oxygen transport from the lung to the various peripheral tissues. The sequence is that of Hemoglobin subunit alpha-A (HBAA) from Passer montanus (Eurasian tree sparrow).